A 219-amino-acid chain; its full sequence is Dehydration-responsive element-binding protein 1E (219 aa).

Positions 1–19 (MEWAYYGSGYSSSGTPSPV) are enriched in low complexity. A disordered region spans residues 1-44 (MEWAYYGSGYSSSGTPSPVGGDGDEDSYMTVSSAPPKRRAGRTK). Residues 52-109 (VYKGVRSRNPGRWVCEVREPHGKQRIWLGTFETAEMAARAHDVAAMALRGRAACLNFA) constitute a DNA-binding region (AP2/ERF).

This sequence belongs to the AP2/ERF transcription factor family. ERF subfamily.

It localises to the nucleus. In terms of biological role, transcriptional activator that binds specifically to the DNA sequence 5'-[AG]CCGAC-3'. Binding to the C-repeat/DRE element mediates high salinity- and dehydration-inducible transcription. The sequence is that of Dehydration-responsive element-binding protein 1E (DREB1E) from Oryza sativa subsp. indica (Rice).